Consider the following 122-residue polypeptide: Basic phospholipase A2 homolog Gln49-PLA2 (122 aa).

Intrachain disulfides connect Cys-26/Cys-115, Cys-28/Cys-44, Cys-43/Cys-95, Cys-49/Cys-122, Cys-50/Cys-88, Cys-57/Cys-81, and Cys-75/Cys-86.

It belongs to the phospholipase A2 family. Group II subfamily. Q49 sub-subfamily. In terms of assembly, monomer. In terms of tissue distribution, expressed by the venom gland.

The protein resides in the secreted. In terms of biological role, snake venom phospholipase A2 (PLA2) homolog that shows local myotoxicity, apparent anticoagulant activity, and neurotoxicity. Shows analgesic effect on mice due to a decrease of action potentials and nerve conduction velocity. These effects are caused by inhibition of voltage-gated ion channels (potassium (Kv) and sodium (Nav)). In addition, analgesic effects are antagonized by naloxone, implying the mechanism of action is correlated with opioid receptors (probably indirectly). Does not show detectable PLA2 activity on egg yolk phospholipids. This chain is Basic phospholipase A2 homolog Gln49-PLA2, found in Gloydius ussuriensis (Ussuri mamushi).